We begin with the raw amino-acid sequence, 93 residues long: Small ribosomal subunit protein bS18 (93 aa).

This sequence belongs to the bacterial ribosomal protein bS18 family. Part of the 30S ribosomal subunit. Forms a tight heterodimer with protein bS6.

In terms of biological role, binds as a heterodimer with protein bS6 to the central domain of the 16S rRNA, where it helps stabilize the platform of the 30S subunit. The chain is Small ribosomal subunit protein bS18 from Delftia acidovorans (strain DSM 14801 / SPH-1).